A 133-amino-acid polypeptide reads, in one-letter code: Ribosome-binding factor A (133 aa).

Belongs to the RbfA family. Monomer. Binds 30S ribosomal subunits, but not 50S ribosomal subunits or 70S ribosomes.

It localises to the cytoplasm. Functionally, one of several proteins that assist in the late maturation steps of the functional core of the 30S ribosomal subunit. Associates with free 30S ribosomal subunits (but not with 30S subunits that are part of 70S ribosomes or polysomes). Required for efficient processing of 16S rRNA. May interact with the 5'-terminal helix region of 16S rRNA. The polypeptide is Ribosome-binding factor A (Salmonella typhi).